Reading from the N-terminus, the 211-residue chain is ATP phosphoribosyltransferase (211 aa).

Belongs to the ATP phosphoribosyltransferase family. Short subfamily. In terms of assembly, heteromultimer composed of HisG and HisZ subunits.

Its subcellular location is the cytoplasm. It carries out the reaction 1-(5-phospho-beta-D-ribosyl)-ATP + diphosphate = 5-phospho-alpha-D-ribose 1-diphosphate + ATP. Its pathway is amino-acid biosynthesis; L-histidine biosynthesis; L-histidine from 5-phospho-alpha-D-ribose 1-diphosphate: step 1/9. Functionally, catalyzes the condensation of ATP and 5-phosphoribose 1-diphosphate to form N'-(5'-phosphoribosyl)-ATP (PR-ATP). Has a crucial role in the pathway because the rate of histidine biosynthesis seems to be controlled primarily by regulation of HisG enzymatic activity. The sequence is that of ATP phosphoribosyltransferase from Pseudomonas aeruginosa (strain UCBPP-PA14).